A 211-amino-acid chain; its full sequence is Thymidylate kinase (211 aa).

Position 10-17 (10-17) interacts with ATP; it reads GPDGAGKT.

The protein belongs to the thymidylate kinase family.

The enzyme catalyses dTMP + ATP = dTDP + ADP. Its function is as follows. Phosphorylation of dTMP to form dTDP in both de novo and salvage pathways of dTTP synthesis. In Lactococcus lactis subsp. cremoris (strain MG1363), this protein is Thymidylate kinase.